The primary structure comprises 350 residues: Ribosome production factor 2 homolog (350 aa).

Residues 28 to 266 (KTCLFLRGTT…LGRMREPDPA (239 aa)) form the Brix domain. A compositionally biased stretch (polar residues) spans 192–202 (PTSSTSTNNDG). Disordered stretches follow at residues 192 to 219 (PTSSTSTNNDGENPAPLPGMTDPRSIDP) and 301 to 350 (MGKT…KVKG).

Belongs to the RPF2 family. As to quaternary structure, component of a hexameric 5S RNP precursor complex, composed of 5S RNA, RRS1, RPF2, RPL5, RPL11 and SYO1; this complex acts as a precursor for ribosome assembly.

The protein localises to the nucleus. It localises to the nucleolus. In terms of biological role, involved in ribosomal large subunit assembly. The sequence is that of Ribosome production factor 2 homolog from Chaetomium thermophilum (strain DSM 1495 / CBS 144.50 / IMI 039719) (Thermochaetoides thermophila).